We begin with the raw amino-acid sequence, 577 residues long: CDPK-related kinase 7 (577 aa).

Residues 1-38 (MGLCHGKPIEQQSKNLPISNEIEETPKNSSQKAKSSGF) are disordered. The N-myristoyl glycine moiety is linked to residue G2. Residues 124–386 (YEIDGEVGRG…AAQALCHPWL (263 aa)) form the Protein kinase domain. Residues 130–138 (VGRGHFGYT) and K156 contribute to the ATP site. D252 serves as the catalytic Proton acceptor. S292 bears the Phosphoserine mark. S334 is modified (phosphoserine; by CPK1, CPK10 and CPK34). An autoinhibitory domain region spans residues 391–421 (ELKIPSDMIIYKLVKVYIMSSSLRKSALAAL). Residues 410–430 (SSSLRKSALAALAKTLTVPQL) are calmodulin binding (CaMBD). EF-hand domains follow at residues 428–464 (PQLT…STEA), 465–500 (TKDS…VYQL), 501–540 (EAME…GPSV), and 543–572 (HVVL…VSSR). Residues S443, N445, Y447, K484, E489, D520, N522, E529, D554, and K556 each coordinate Ca(2+). Position 558 is a phosphoserine (S558).

This sequence belongs to the protein kinase superfamily. Ser/Thr protein kinase family. CDPK subfamily. Binds calmodulin (CaM) in a calcium-dependent manner. Post-translationally, autophosphorylated.

It localises to the membrane. It catalyses the reaction L-seryl-[protein] + ATP = O-phospho-L-seryl-[protein] + ADP + H(+). It carries out the reaction L-threonyl-[protein] + ATP = O-phospho-L-threonyl-[protein] + ADP + H(+). Activated by calcium and calmodulin. Autophosphorylation may play an important role in the regulation of the kinase activity. Its function is as follows. May play a role in signal transduction pathways that involve calcium as a second messenger. The polypeptide is CDPK-related kinase 7 (CRK7) (Arabidopsis thaliana (Mouse-ear cress)).